Consider the following 241-residue polypeptide: Geranylgeranylglyceryl phosphate synthase (241 aa).

Mg(2+) is bound by residues Asp26 and Ser52. Residues 172-178 (YFEAGSG), 204-205 (GG), and 226-227 (GT) contribute to the sn-glycerol 1-phosphate site.

Belongs to the GGGP/HepGP synthase family. Group II subfamily. It depends on Mg(2+) as a cofactor.

Its subcellular location is the cytoplasm. It carries out the reaction sn-glycerol 1-phosphate + (2E,6E,10E)-geranylgeranyl diphosphate = sn-3-O-(geranylgeranyl)glycerol 1-phosphate + diphosphate. It participates in membrane lipid metabolism; glycerophospholipid metabolism. In terms of biological role, prenyltransferase that catalyzes the transfer of the geranylgeranyl moiety of geranylgeranyl diphosphate (GGPP) to the C3 hydroxyl of sn-glycerol-1-phosphate (G1P). This reaction is the first ether-bond-formation step in the biosynthesis of archaeal membrane lipids. In Hyperthermus butylicus (strain DSM 5456 / JCM 9403 / PLM1-5), this protein is Geranylgeranylglyceryl phosphate synthase.